The chain runs to 111 residues: DNA-binding protein MTH_1615 (111 aa).

The protein belongs to the PDCD5 family.

Functionally, DNA-binding protein which can interact with a randomly chosen 20-mer of double-stranded DNA. The polypeptide is DNA-binding protein MTH_1615 (Methanothermobacter thermautotrophicus (strain ATCC 29096 / DSM 1053 / JCM 10044 / NBRC 100330 / Delta H) (Methanobacterium thermoautotrophicum)).